A 1773-amino-acid polypeptide reads, in one-letter code: ATP-binding cassette sub-family A member 17 (1773 aa).

The next 3 helical transmembrane spans lie at 22-42 (TLVT…VLYL), 262-282 (FPLL…NSIL), and 306-326 (AWFI…TVLF). N340 carries an N-linked (GlcNAc...) asparagine glycan. 4 consecutive transmembrane segments (helical) span residues 342–362 (TLIF…AFMM), 372–392 (GTVI…YITF), 403–423 (ILSC…ISLF), and 444–464 (FTQV…VAFL). The ABC transporter 1 domain occupies 525–758 (IEIQHLYKVF…YGAGYYMTII (234 aa)). 561 to 568 (GHNGAGKT) serves as a coordination point for ATP. N-linked (GlcNAc...) asparagine glycosylation occurs at N615. Helical transmembrane passes span 912–932 (LVLS…LSFF), 1088–1108 (LVVN…ILTV), 1134–1154 (LLWD…VFFW), 1166–1186 (IPAV…LVYT), 1198–1218 (CVKL…LVTV), 1236–1256 (IFLI…YYNF), and 1293–1313 (IGKY…LLFL). N1340 carries an N-linked (GlcNAc...) asparagine glycan. An ABC transporter 2 domain is found at 1369–1602 (LVVKELSKVY…FGSGYSLQAK (234 aa)). Residue 1404 to 1411 (GLNGAGKT) coordinates ATP. The disordered stretch occupies residues 1690 to 1773 (NIQQGQAALD…SQPPSEPVLL (84 aa)). Over residues 1700 to 1710 (SSLSPSNSRPI) the composition is skewed to low complexity. Pro residues-rich tracts occupy residues 1711–1740 (SSPP…PSRP) and 1763–1773 (PSQPPSEPVLL).

It belongs to the ABC transporter superfamily. ABCA family. N-glycosylated.

It is found in the endoplasmic reticulum membrane. It localises to the cytoplasm. The catalysed reaction is cholesterol(in) + ATP + H2O = cholesterol(out) + ADP + phosphate + H(+). Its function is as follows. Promotes cholesterol efflux from sperm which renders sperm capable of fertilization. Has also been shown to decrease levels of intracellular esterified neutral lipids including cholesteryl esters, fatty acid esters and triacylglycerols. The chain is ATP-binding cassette sub-family A member 17 from Rattus norvegicus (Rat).